Reading from the N-terminus, the 541-residue chain is MCKDKNEKKNYEHVNANEKNGYLASEKNELTKNKVEEHTYDYDYVVIGGGPGGMASAKEAAAHGARVLLFDYVKPSSQGTKWGIGGTCVNVGCVPKKLMHYAGHMGSIFKLDSKAYGWKFDNLKHDWKKLVTTVQSHIRSLNFSYMTGLRSSKVKYINGLAKLKDKNTVSYYLKGDLSKEETVTGKYILIATGCRPHIPDDVEGAKELSITSDDIFSLKKDPGKTLVVGASYVALECSGFLNSLGYDVTVAVRSIVLRGFDQQCAVKVKLYMEEQGVMFKNGILPKKLTKMDDKILVEFSDKTSELYDTVLYAIGRKGDIDGLNLESLNMNVNKSNNKIIADHLSCTNIPSIFAVGDVAENVPELAPVAIKAGEILARRLFKDSDEIMDYSYIPTSIYTPIEYGACGYSEEKAYELYGKSNVEVFLQEFNNLEISAVHRQKHIRAQKDEYDLDVSSTCLAKLVCLKNEDNRVIGFHYVGPNAGEVTQGMALALRLKVKKKDFDNCIGIHPTDAESFMNLFVTISSGLSYAAKGGCGGGKCG.

FAD is bound by residues 51–52 (PG), 71–74 (DYVK), 87–88 (TC), 92–96 (GCVPK), Ala-161, Asp-357, and 364–366 (ELA). Cys-88 and Cys-93 are disulfide-bonded. A loop important for the interaction with TRX1 region spans residues 438-452 (HRQKHIRAQKDEYDL). Residue His-509 coordinates FAD. The active-site Proton acceptor is the His-509. A disulfide bridge connects residues Cys-535 and Cys-540.

The protein belongs to the class-I pyridine nucleotide-disulfide oxidoreductase family. As to quaternary structure, homodimer. The cofactor is FAD.

It is found in the cytoplasm. It carries out the reaction [thioredoxin]-dithiol + NADP(+) = [thioredoxin]-disulfide + NADPH + H(+). Functionally, catalyzes the transfer of electrons from NADPH to thioredoxins TRX1, TRX2 and TRX3, which in turn act as reductants of disulfide containing proteins. Able to reduce nitroglutathione (GSNO), a compound involved in the transport of nitric oxide (NO); however, TRX1 is more efficient in reducing GSNO. Has no catalytic activity towards oxidized glutathione (GSSG). In Plasmodium falciparum (isolate FCH-5), this protein is Thioredoxin reductase.